A 1148-amino-acid chain; its full sequence is Zinc finger CCCH domain-containing protein 18 (1148 aa).

A compositionally biased stretch (low complexity) spans 1 to 13; the sequence is MDTPESPTQSPQS. 3 disordered regions span residues 1–315, 380–417, and 521–1127; these read MDTP…PMDR, DPFS…LPPP, and YTET…REEL. 2 stretches are compositionally biased toward basic and acidic residues: residues 53 to 73 and 82 to 96; these read VPEH…AGRE and EDYK…DIHQ. Composition is skewed to acidic residues over residues 144–156 and 167–176; these read ERGD…EEDE and ELEEEEDEEE. Over residues 190 to 202 the composition is skewed to basic and acidic residues; the sequence is DLKDESSVSRDLD. 2 stretches are compositionally biased toward acidic residues: residues 203 to 214 and 233 to 245; these read EHELDYDEEVPE and EDGE…DEEE. The span at 261–289 shows a compositional bias: basic and acidic residues; sequence DNRDTPLRKSEDSREGGRRDSFRDKKKEE. Acidic residues predominate over residues 290–306; it reads DDGEIDEGEIDDDDLEE. Residues 388-397 are compositionally biased toward gly residues; that stretch reads PPGGAAGGGP. Residues 530 to 615 show a composition bias toward basic and acidic residues; that stretch reads PDRERERDPR…EKKDEKEKTL (86 aa). Residues 543-584 adopt a coiled-coil conformation; that stretch reads RERERERERDHRERERRQREREREREREREKDSRRRKDEWDR. The segment covering 622-631 has biased composition (pro residues); it reads NMPPRGPMEP. Positions 632–646 are enriched in basic and acidic residues; that stretch reads PTKKDMLSVTKRPDE. Position 666 is a phosphoserine (serine 666). A compositionally biased stretch (low complexity) spans 677–740; the sequence is SGSSVSLSNS…SRSGSFSSSP (64 aa). Composition is skewed to pro residues over residues 783 to 800 and 807 to 817; these read KVMP…PPKP and PPNPRPPGRPP. The span at 818–833 shows a compositional bias: basic and acidic residues; the sequence is GPREPREPPNMREGRK. 3 stretches are compositionally biased toward low complexity: residues 847–875, 882–903, and 914–925; these read VSGS…ASRS, SLSV…SVRS, and ASPVSSASSRSP. 2 stretches are compositionally biased toward basic and acidic residues: residues 933–964 and 1012–1029; these read DRGP…KRVD and QTDR…KERP. The residue at position 1056 (serine 1056) is a Phosphoserine. 2 stretches are compositionally biased toward low complexity: residues 1083 to 1098 and 1107 to 1119; these read PAKS…SAAK and GSAS…KPSS. The stretch at 1118 to 1146 forms a coiled coil; the sequence is SSTLSRREELLKQLKAVEDAIARKRAKIP.

Its subcellular location is the nucleus. This chain is Zinc finger CCCH domain-containing protein 18 (zc3h18), found in Danio rerio (Zebrafish).